A 689-amino-acid polypeptide reads, in one-letter code: Pentatricopeptide repeat-containing protein At1g71460, chloroplastic (689 aa).

A chloroplast-targeting transit peptide spans 1 to 49; it reads MEVVSSLGIRDLPASLSVTTSLNHRPHRSDKDGAPAKSPIRPSRTRRPS. Residues 16-68 form a disordered region; that stretch reads LSVTTSLNHRPHRSDKDGAPAKSPIRPSRTRRPSTSPAKKPKPFRERDAFPSS. Residues 38 to 52 show a composition bias toward low complexity; sequence SPIRPSRTRRPSTSP. PPR repeat units follow at residues 75–109, 110–144, 145–175, 176–212, 213–247, 248–282, 283–309, 315–350, 351–381, 382–416, 417–451, 452–482, 483–517, 518–552, 553–583, 584–618, 619–649, and 655–689; these read NPYIIHRDIQIFARQNNLEVALTILDYLEQRGIPV, NATTFSALLEACVRRKSLLHGKQVHVHIRINGLES, NEFLRTKLVHMYTACGSVKDAQKVFDESTSS, NVYSWNALLRGTVISGKKRYQDVLSTFTEMRELGVDL, NVYSLSNVFKSFAGASALRQGLKTHALAIKNGLFN, SVFLKTSLVDMYFKCGKVGLARRVFDEIVERDIVV, WGAMIAGLAHNKRQWEALGLFRTMISE, NSVILTTILPVLGDVKALKLGKEVHAHVLKSKNYVE, QPFVHSGLIDLYCKCGDMASGRRVFYGSKQR, NAISWTALMSGYAANGRFDQALRSIVWMQQEGFRP, DVVTIATVLPVCAELRAIKQGKEIHCYALKNLFLP, NVSLVTSLMVMYSKCGVPEYPIRLFDRLEQR, NVKAWTAMIDCYVENCDLRAGIEVFRLMLLSKHRP, DSVTMGRVLTVCSDLKALKLGKELHGHILKKEFES, IPFVSARIIKMYGKCGDLRSANFSFDAVAVK, GSLTWTAIIEAYGCNELFRDAINCFEQMVSRGFTP, NTFTFTAVLSICSQAGFVDEAYRFFNLMLRM, and SEEHYSLVIELLNRCGRVEEAQRLAVMSSSSSLQT.

Belongs to the PPR family. PCMP-A subfamily.

Its subcellular location is the plastid. The protein resides in the chloroplast. The protein is Pentatricopeptide repeat-containing protein At1g71460, chloroplastic (PCMP-A3) of Arabidopsis thaliana (Mouse-ear cress).